Here is a 228-residue protein sequence, read N- to C-terminus: Urease accessory protein UreH (228 aa).

Transmembrane regions (helical) follow at residues 48–68 (VFWG…IILM), 79–99 (SLEF…ILSL), 130–150 (LFIG…LTMS), 162–182 (ILFF…LIGI), and 196–216 (AFIQ…MYNL).

This sequence belongs to the NiCoT transporter (TC 2.A.52) family.

The protein localises to the cell membrane. In terms of biological role, probably facilitates nickel incorporation. May constitute a multicomponent high-affinity nickel transporter. Not essential for the expression of catalytically active urease. In Bacillus sp. (strain TB-90), this protein is Urease accessory protein UreH (ureH).